Consider the following 83-residue polypeptide: Cell division topological specificity factor (83 aa).

It belongs to the MinE family.

Functionally, prevents the cell division inhibition by proteins MinC and MinD at internal division sites while permitting inhibition at polar sites. This ensures cell division at the proper site by restricting the formation of a division septum at the midpoint of the long axis of the cell. The polypeptide is Cell division topological specificity factor (Marinobacter nauticus (strain ATCC 700491 / DSM 11845 / VT8) (Marinobacter aquaeolei)).